The primary structure comprises 433 residues: Putative tartrate transporter (433 aa).

A run of 11 helical transmembrane segments spans residues 17–37, 47–67, 82–102, 113–133, 139–159, 177–197, 242–262, 275–295, 314–334, 350–370, and 395–415; these read IVPF…NIGF, GFSS…YFLF, IWIA…AFVQ, LLGV…SFWF, AAVT…GSPI, WMFL…LFYL, VIAL…LGIW, LQVG…MVLW, LLAA…TVLI, LWSM…IATI, and FAGG…VTLV.

The protein belongs to the major facilitator superfamily. Phthalate permease family.

It localises to the cell membrane. Component of the tartrate utilization system and may allow entry of tartrate and tartrate dehydrogenase. The polypeptide is Putative tartrate transporter (ttuB) (Agrobacterium vitis (Rhizobium vitis)).